A 733-amino-acid polypeptide reads, in one-letter code: Zinc finger protein indra (733 aa).

The region spanning 17–91 (VRCDHCGTSQ…RETVDRVQEQ (75 aa)) is the ZAD domain. Residues Cys-19, Cys-22, Cys-64, and Cys-67 each contribute to the Zn(2+) site. Basic and acidic residues predominate over residues 90–100 (EQPAKKTKVAE). Residues 90-121 (EQPAKKTKVAEIEEPSTQESDKKAVKVPKKNT) form a disordered region. Phosphoserine occurs at positions 109, 153, and 176. 2 positions are modified to phosphothreonine: Thr-180 and Thr-188. 2 consecutive C2H2-type zinc fingers follow at residues 228-251 (FQCP…QKEH) and 259-282 (YPCT…RDTH). Over residues 285 to 316 (TFESEAKTKAKESKEKEAKSGAKNKIDAKAKE) the composition is skewed to basic and acidic residues. The disordered stretch occupies residues 285–336 (TFESEAKTKAKESKEKEAKSGAKNKIDAKAKETNAVSQRKKPKEKKSKEKKT). C2H2-type zinc fingers lie at residues 416–439 (FQCE…KTVH) and 447–469 (FKCH…MTLH). Disordered stretches follow at residues 499–525 (IENT…FTNR) and 540–622 (AFKT…SSDV). A compositionally biased stretch (polar residues) spans 592–602 (SVSTTNGNSPA). Phosphoserine occurs at positions 600, 642, and 646. Thr-647 carries the phosphothreonine modification. C2H2-type zinc fingers lie at residues 653–676 (LSCD…EKKH) and 708–733 (LPCG…RKRH). The residue at position 654 (Ser-654) is a Phosphoserine.

Belongs to the krueppel C2H2-type zinc-finger protein family.

The protein resides in the nucleus. It localises to the nucleolus. In terms of biological role, required for rDNA copy number maintenance and non-random sister chromatid segregation (NRSS) following unequal sister chromatid exchange. Binds ribosomal DNA (rDNA) preferentially binding to intergenic spacers (IGS) regions on both X and Y chromosomes. Essential for NRSS, a mechanism which contributes to the recovery and maintenance of inherently unstable rDNA copy numbers so that the integrity of the germline genome is upheld over generations and germline immortality is sustained. May be involved in transcriptional regulation. In Drosophila melanogaster (Fruit fly), this protein is Zinc finger protein indra.